A 147-amino-acid chain; its full sequence is Large ribosomal subunit protein uL13 (147 aa).

The protein belongs to the universal ribosomal protein uL13 family. Part of the 50S ribosomal subunit.

In terms of biological role, this protein is one of the early assembly proteins of the 50S ribosomal subunit, although it is not seen to bind rRNA by itself. It is important during the early stages of 50S assembly. The polypeptide is Large ribosomal subunit protein uL13 (Paenarthrobacter aurescens (strain TC1)).